Here is a 216-residue protein sequence, read N- to C-terminus: tRNA (guanine-N(7)-)-methyltransferase (216 aa).

S-adenosyl-L-methionine-binding residues include glutamate 44, glutamate 69, asparagine 96, and aspartate 118. Residue aspartate 118 is part of the active site. Lysine 122 provides a ligand contact to substrate. Positions arginine 124 to arginine 129 are interaction with RNA. Substrate is bound by residues aspartate 154 and threonine 191–glutamate 194.

The protein belongs to the class I-like SAM-binding methyltransferase superfamily. TrmB family.

The enzyme catalyses guanosine(46) in tRNA + S-adenosyl-L-methionine = N(7)-methylguanosine(46) in tRNA + S-adenosyl-L-homocysteine. It participates in tRNA modification; N(7)-methylguanine-tRNA biosynthesis. In terms of biological role, catalyzes the formation of N(7)-methylguanine at position 46 (m7G46) in tRNA. The chain is tRNA (guanine-N(7)-)-methyltransferase from Geobacillus thermodenitrificans (strain NG80-2).